Here is a 171-residue protein sequence, read N- to C-terminus: Peptide methionine sulfoxide reductase MsrA (171 aa).

C13 is a catalytic residue.

The protein belongs to the MsrA Met sulfoxide reductase family.

It catalyses the reaction L-methionyl-[protein] + [thioredoxin]-disulfide + H2O = L-methionyl-(S)-S-oxide-[protein] + [thioredoxin]-dithiol. It carries out the reaction [thioredoxin]-disulfide + L-methionine + H2O = L-methionine (S)-S-oxide + [thioredoxin]-dithiol. In terms of biological role, has an important function as a repair enzyme for proteins that have been inactivated by oxidation. Catalyzes the reversible oxidation-reduction of methionine sulfoxide in proteins to methionine. The chain is Peptide methionine sulfoxide reductase MsrA from Mycobacterium sp. (strain JLS).